The primary structure comprises 38 residues: Photosystem II reaction center protein L (38 aa).

Residues 17–37 (GLYWGLLLIFVLAVLFSSYFF) traverse the membrane as a helical segment.

Belongs to the PsbL family. In terms of assembly, PSII is composed of 1 copy each of membrane proteins PsbA, PsbB, PsbC, PsbD, PsbE, PsbF, PsbH, PsbI, PsbJ, PsbK, PsbL, PsbM, PsbT, PsbX, PsbY, PsbZ, Psb30/Ycf12, at least 3 peripheral proteins of the oxygen-evolving complex and a large number of cofactors. It forms dimeric complexes.

The protein localises to the plastid. It localises to the chloroplast thylakoid membrane. One of the components of the core complex of photosystem II (PSII). PSII is a light-driven water:plastoquinone oxidoreductase that uses light energy to abstract electrons from H(2)O, generating O(2) and a proton gradient subsequently used for ATP formation. It consists of a core antenna complex that captures photons, and an electron transfer chain that converts photonic excitation into a charge separation. This subunit is found at the monomer-monomer interface and is required for correct PSII assembly and/or dimerization. In Staurastrum punctulatum (Green alga), this protein is Photosystem II reaction center protein L.